The following is a 328-amino-acid chain: UDP-glucose 4-epimerase (328 aa).

Threonine 119 contributes to the substrate binding site. Catalysis depends on tyrosine 143, which acts as the Proton acceptor.

Belongs to the NAD(P)-dependent epimerase/dehydratase family. NAD(+) is required as a cofactor.

It carries out the reaction UDP-alpha-D-glucose = UDP-alpha-D-galactose. The protein operates within carbohydrate metabolism; galactose metabolism. Its pathway is glycan metabolism; exopolysaccharide biosynthesis. The sequence is that of UDP-glucose 4-epimerase (exoB) from Rhizobium meliloti (strain 1021) (Ensifer meliloti).